We begin with the raw amino-acid sequence, 128 residues long: MVYELKSPLLGFEEIKEFDLVEVDEMFAKIKAINNPSIEITLANPYALREYSFDIPAYIQALLDINAQSKVRVFCTVVIQNPIDESRVNFLAPLIFNDDNQTAAQIALSIKDYPDFSVADKIKNYVKE.

Belongs to the FliW family. In terms of assembly, interacts with translational regulator CsrA and flagellin(s).

The protein resides in the cytoplasm. Functionally, acts as an anti-CsrA protein, binds CsrA and prevents it from repressing translation of its target genes, one of which is flagellin. Binds to flagellin and participates in the assembly of the flagellum. In Wolinella succinogenes (strain ATCC 29543 / DSM 1740 / CCUG 13145 / JCM 31913 / LMG 7466 / NCTC 11488 / FDC 602W) (Vibrio succinogenes), this protein is Flagellar assembly factor FliW 1.